The chain runs to 108 residues: UPF0060 membrane protein DSY4629 (108 aa).

The next 4 helical transmembrane spans lie at Ile5–Trp25, Pro31–Leu51, Val60–Asp80, and Asn86–Pro106.

It belongs to the UPF0060 family.

Its subcellular location is the cell membrane. In Desulfitobacterium hafniense (strain Y51), this protein is UPF0060 membrane protein DSY4629.